A 64-amino-acid polypeptide reads, in one-letter code: Large ribosomal subunit protein bL35 (64 aa).

The protein belongs to the bacterial ribosomal protein bL35 family.

The sequence is that of Large ribosomal subunit protein bL35 from Vibrio vulnificus (strain CMCP6).